The sequence spans 288 residues: Diaminopimelate epimerase (288 aa).

Substrate contacts are provided by Asn14 and Asn67. The Proton donor role is filled by Cys76. Substrate contacts are provided by residues 77–78 (GN), Asn166, Asn199, and 217–218 (ER). Cys226 functions as the Proton acceptor in the catalytic mechanism. 227–228 (GT) is a binding site for substrate.

Belongs to the diaminopimelate epimerase family. In terms of assembly, homodimer.

The protein resides in the cytoplasm. The enzyme catalyses (2S,6S)-2,6-diaminopimelate = meso-2,6-diaminopimelate. It participates in amino-acid biosynthesis; L-lysine biosynthesis via DAP pathway; DL-2,6-diaminopimelate from LL-2,6-diaminopimelate: step 1/1. In terms of biological role, catalyzes the stereoinversion of LL-2,6-diaminopimelate (L,L-DAP) to meso-diaminopimelate (meso-DAP), a precursor of L-lysine and an essential component of the bacterial peptidoglycan. The polypeptide is Diaminopimelate epimerase (Bacillus mycoides (strain KBAB4) (Bacillus weihenstephanensis)).